Consider the following 224-residue polypeptide: Synaptogyrin-2 (224 aa).

M1 carries the N-acetylmethionine modification. The residue at position 3 (S3) is a Phosphoserine. The MARVEL domain occupies 20–171 (YVSQPQVVTR…LASLAYQRYK (152 aa)). A run of 4 helical transmembrane segments spans residues 30-50 (LVSMVLALIVFSCIFGEGYIN), 73-93 (AIGVLAFLASAFFLVVDAFFS), 105-125 (VIGDLLFSALWTFLWFVGFCF), and 147-167 (AAITFSFFSIFSWGVLASLAY).

The protein belongs to the synaptogyrin family. In terms of processing, may be tyrosine phosphorylated by Src. In terms of tissue distribution, ubiquitously expressed with lower expression in brain (at protein level).

It localises to the cytoplasmic vesicle membrane. The protein resides in the cytoplasmic vesicle. It is found in the secretory vesicle. The protein localises to the synaptic vesicle membrane. Functionally, may play a role in regulated exocytosis. In neuronal cells, modulates the localization of synaptophysin/SYP into synaptic-like microvesicles and may therefore play a role in the formation and/or the maturation of this vesicles. May also play a role in GLUT4 storage and transport to the plasma membrane. The protein is Synaptogyrin-2 of Rattus norvegicus (Rat).